The chain runs to 899 residues: DNA mismatch repair protein MutS (899 aa).

The disordered stretch occupies residues 1-20 (MGLQKKTDPEQAQADSAASR). Position 631-638 (631-638 (GPNMGGKS)) interacts with ATP. The segment at 832–852 (PPTPDDDEDDFGAAPSAVPAP) is disordered. Over residues 843 to 852 (GAAPSAVPAP) the composition is skewed to low complexity.

The protein belongs to the DNA mismatch repair MutS family.

Its function is as follows. This protein is involved in the repair of mismatches in DNA. It is possible that it carries out the mismatch recognition step. This protein has a weak ATPase activity. This Cupriavidus necator (strain ATCC 17699 / DSM 428 / KCTC 22496 / NCIMB 10442 / H16 / Stanier 337) (Ralstonia eutropha) protein is DNA mismatch repair protein MutS.